The chain runs to 83 residues: MEVKTLANIKSAIKRAELNVKQNEKNSAQKSALRTVIKAFKANPTEEAFRAASASIDKAASKGLIHKNKASRDKSRLAAKLAN.

Residues 60–83 (ASKGLIHKNKASRDKSRLAAKLAN) are disordered.

This sequence belongs to the bacterial ribosomal protein bS20 family.

Functionally, binds directly to 16S ribosomal RNA. The protein is Small ribosomal subunit protein bS20 of Streptococcus thermophilus (strain CNRZ 1066).